A 554-amino-acid polypeptide reads, in one-letter code: Probable phospholipase D F09G2.8 (554 aa).

At 1-123 (MPLRLINFRQ…GNSRNRIIKP (123 aa)) the chain is on the cytoplasmic side. The chain crosses the membrane as a helical; Signal-anchor for type II membrane protein span at residues 124-144 (ACVPISIVSLFIIALVFLPLF). The Extracellular segment spans residues 145 to 554 (NEEDLASPIK…DWNSEYSKDL (410 aa)). N-linked (GlcNAc...) asparagine glycans are attached at residues Asn-181, Asn-208, Asn-244, and Asn-266. Positions 272 to 299 (GSGIIHTKFILSDIATLYIGSANMDWKS) constitute a PLD phosphodiesterase 1 domain. Active-site residues include His-277, Lys-279, and Asp-284. 4 N-linked (GlcNAc...) asparagine glycosylation sites follow: Asn-333, Asn-350, Asn-468, and Asn-513. A PLD phosphodiesterase 2 domain is found at 492–518 (FTRVNHAKYMVTEDIAYIGTSNWSGDY).

This sequence belongs to the phospholipase D family.

The protein localises to the membrane. The catalysed reaction is a 1,2-diacyl-sn-glycero-3-phosphocholine + H2O = a 1,2-diacyl-sn-glycero-3-phosphate + choline + H(+). This Caenorhabditis elegans protein is Probable phospholipase D F09G2.8.